Here is a 372-residue protein sequence, read N- to C-terminus: Spermidine/putrescine import ATP-binding protein PotA (372 aa).

Residues 11-241 (IELRSITKSY…PANLFVARFI (231 aa)) form the ABC transporter domain. 43 to 50 (GPSGCGKT) contacts ATP.

Belongs to the ABC transporter superfamily. Spermidine/putrescine importer (TC 3.A.1.11.1) family. The complex is composed of two ATP-binding proteins (PotA), two transmembrane proteins (PotB and PotC) and a solute-binding protein (PotD).

It localises to the cell inner membrane. The enzyme catalyses ATP + H2O + polyamine-[polyamine-binding protein]Side 1 = ADP + phosphate + polyamineSide 2 + [polyamine-binding protein]Side 1.. Its function is as follows. Part of the ABC transporter complex PotABCD involved in spermidine/putrescine import. Responsible for energy coupling to the transport system. The protein is Spermidine/putrescine import ATP-binding protein PotA of Aggregatibacter actinomycetemcomitans (Actinobacillus actinomycetemcomitans).